The following is a 1058-amino-acid chain: Ubiquitin-like modifier-activating enzyme 1 (1058 aa).

Residues 1-47 form a disordered region; that stretch reads MSSSPLSKKRRVSGPDPKPGSNCSPAQSVLSEVPSVPTNGMAKNGSE. Position 2 is an N-acetylserine (Ser2). Ser2 bears the N-acetylalanine mark. Ser4 carries the post-translational modification Phosphoserine. A Nuclear localization signal motif is present at residues 5 to 11; it reads PLSKKRR. Phosphoserine is present on residues Ser13, Ser21, Ser24, and Ser46. Polar residues predominate over residues 21-30; that stretch reads SNCSPAQSVL. Tyr55 is subject to Phosphotyrosine. A run of 2 repeats spans residues 63–199 and 459–611. The interval 63–611 is 2 approximate repeats; it reads GHEAMKRLQT…GTKGNVQVVI (549 aa). Residues Ala478, Asp504, Arg515, Lys528, and 576 to 577 contribute to the ATP site; that span reads DN. An N6-succinyllysine modification is found at Lys528. The active-site Glycyl thioester intermediate is the Cys632. An N6-acetyllysine modification is found at Lys671. A Phosphothreonine modification is found at Thr800. A phosphoserine mark is found at Ser810, Ser816, Ser820, and Ser835. N6-acetyllysine is present on Lys980.

Belongs to the ubiquitin-activating E1 family. Monomer. Interacts with GAN (via BTB domain). Post-translationally, ISGylated. In terms of tissue distribution, detected in erythrocytes (at protein level). Ubiquitous.

Its subcellular location is the cytoplasm. It is found in the mitochondrion. The protein resides in the nucleus. The catalysed reaction is ATP + ubiquitin + [E1 ubiquitin-activating enzyme]-L-cysteine = AMP + diphosphate + S-ubiquitinyl-[E1 ubiquitin-activating enzyme]-L-cysteine.. It participates in protein modification; protein ubiquitination. Its function is as follows. Catalyzes the first step in ubiquitin conjugation to mark cellular proteins for degradation through the ubiquitin-proteasome system. Activates ubiquitin by first adenylating its C-terminal glycine residue with ATP, and thereafter linking this residue to the side chain of a cysteine residue in E1, yielding a ubiquitin-E1 thioester and free AMP. Essential for the formation of radiation-induced foci, timely DNA repair and for response to replication stress. Promotes the recruitment of TP53BP1 and BRCA1 at DNA damage sites. The sequence is that of Ubiquitin-like modifier-activating enzyme 1 (UBA1) from Homo sapiens (Human).